We begin with the raw amino-acid sequence, 202 residues long: Urease accessory protein UreG (202 aa).

Residue Gly10–Thr17 coordinates GTP.

This sequence belongs to the SIMIBI class G3E GTPase family. UreG subfamily. Homodimer. UreD, UreF and UreG form a complex that acts as a GTP-hydrolysis-dependent molecular chaperone, activating the urease apoprotein by helping to assemble the nickel containing metallocenter of UreC. The UreE protein probably delivers the nickel.

It localises to the cytoplasm. Functionally, facilitates the functional incorporation of the urease nickel metallocenter. This process requires GTP hydrolysis, probably effectuated by UreG. The polypeptide is Urease accessory protein UreG (Synechococcus sp. (strain JA-3-3Ab) (Cyanobacteria bacterium Yellowstone A-Prime)).